The sequence spans 568 residues: Periplasmic trehalase (568 aa).

A signal peptide spans 1–38 (MPHAPARSGDAMSAAAPPCCTSLLGLSLSMFVAPCALA). Substrate is bound by residues Arg-169, 176–177 (WD), Asn-213, 222–224 (RSQ), 294–296 (RPE), and Gly-327. Active-site proton donor/acceptor residues include Asp-329 and Glu-511. Glu-526 is a substrate binding site.

The protein belongs to the glycosyl hydrolase 37 family.

The protein localises to the periplasm. The catalysed reaction is alpha,alpha-trehalose + H2O = alpha-D-glucose + beta-D-glucose. Provides the cells with the ability to utilize trehalose at high osmolarity by splitting it into glucose molecules that can subsequently be taken up by the phosphotransferase-mediated uptake system. This is Periplasmic trehalase from Xanthomonas campestris pv. campestris (strain B100).